We begin with the raw amino-acid sequence, 470 residues long: Metalloreductase STEAP4 (470 aa).

NADP(+) is bound by residues 27–30 (TGDF), 49–50 (SR), Tyr-67, 81–85 (MHREH), Asn-106, and Ala-139. Trp-140 and Asp-148 together coordinate FAD. Arg-171 is an NADP(+) binding site. 2 helical membrane-spanning segments follow: residues 202-224 (FPFY…REVI) and 236-256 (YRLA…ILLA). Position 217 (Tyr-217) interacts with Fe(3+). The Ferric oxidoreductase domain occupies 247–395 (FPITALILLA…LGYLTLVLCT (149 aa)). FAD-binding residues include Gln-269 and Arg-290. 2 consecutive transmembrane segments (helical) span residues 293–313 (LGLV…VIPI) and 342–362 (AWIN…FLLL). His-304 serves as a coordination point for heme b. Tyr-307 is a binding site for Fe(3+). FAD is bound by residues Ser-366 and Gln-383. 2 helical membrane passes run 381-401 (FVQS…TLVY) and 419-439 (AYIL…ILIM). His-397 contacts heme b.

Belongs to the STEAP family. Homotrimer. Interacts with PTK2/FAK1; the interaction may regulate PTK2 phosphorylation. FAD serves as cofactor. It depends on heme b as a cofactor. Expressed in white and brown adipose tissues cells, as well as in muscle and liver cells. Detected in joints and spleens of arthritic mice.

It localises to the cell membrane. The protein localises to the golgi apparatus membrane. It is found in the early endosome membrane. It catalyses the reaction 2 Fe(2+) + NADP(+) + H(+) = 2 Fe(3+) + NADPH. The enzyme catalyses 2 Cu(+) + NADP(+) + H(+) = 2 Cu(2+) + NADPH. In terms of biological role, integral membrane protein that functions as a NADPH-dependent ferric-chelate reductase, using NADPH from one side of the membrane to reduce a Fe(3+) chelate that is bound on the other side of the membrane. Mediates sequential transmembrane electron transfer from NADPH to FAD and onto heme, and finally to the Fe(3+) chelate. Can also reduce Cu(2+) to Cu(1+). Plays a role in systemic metabolic homeostasis, integrating inflammatory and metabolic responses. Associated with obesity and insulin-resistance. Involved in inflammatory arthritis, through the regulation of inflammatory cytokines. Inhibits anchorage-independent cell proliferation. In Mus musculus (Mouse), this protein is Metalloreductase STEAP4 (Steap4).